A 221-amino-acid chain; its full sequence is Glycerol metabolism activator (221 aa).

One can recognise a Response regulatory domain in the interval 3–120 (KILIADDHPL…QMTDAIEQIL (118 aa)). Aspartate 55 carries the post-translational modification 4-aspartylphosphate. The 66-residue stretch at 149–214 (APELLQALTR…QAILSAGDID (66 aa)) folds into the HTH luxR-type domain. Positions 173 to 192 (NKQIAYNLDIAETTVKAHVS) form a DNA-binding region, H-T-H motif.

Its function is as follows. Positive activator for glycerol metabolism. Regulates the expression of qedA in a positive manner and governs the expression of ADH I and ADH IIB. General regulator of quinoprotein ethanol oxidation and affects expression of ADH IIG activity but is not the sole regulator. In Pseudomonas putida (Arthrobacter siderocapsulatus), this protein is Glycerol metabolism activator.